The primary structure comprises 343 residues: Ribosomal RNA small subunit methyltransferase C (343 aa).

This sequence belongs to the methyltransferase superfamily. RsmC family. As to quaternary structure, monomer.

Its subcellular location is the cytoplasm. It carries out the reaction guanosine(1207) in 16S rRNA + S-adenosyl-L-methionine = N(2)-methylguanosine(1207) in 16S rRNA + S-adenosyl-L-homocysteine + H(+). Its function is as follows. Specifically methylates the guanine in position 1207 of 16S rRNA in the 30S particle. The polypeptide is Ribosomal RNA small subunit methyltransferase C (Shigella sonnei (strain Ss046)).